A 179-amino-acid polypeptide reads, in one-letter code: 3-hydroxyanthranilate 3,4-dioxygenase (179 aa).

R47 contributes to the O2 binding site. Fe cation contacts are provided by H51, E57, and H96. Residue E57 coordinates substrate. 2 residues coordinate substrate: R100 and E110. Positions 125, 128, 162, and 165 each coordinate Fe cation.

It belongs to the 3-HAO family. It depends on Fe(2+) as a cofactor.

It carries out the reaction 3-hydroxyanthranilate + O2 = (2Z,4Z)-2-amino-3-carboxymuconate 6-semialdehyde. The protein operates within cofactor biosynthesis; NAD(+) biosynthesis; quinolinate from L-kynurenine: step 3/3. Its function is as follows. Catalyzes the oxidative ring opening of 3-hydroxyanthranilate to 2-amino-3-carboxymuconate semialdehyde, which spontaneously cyclizes to quinolinate. The protein is 3-hydroxyanthranilate 3,4-dioxygenase of Bacillus thuringiensis (strain Al Hakam).